Consider the following 1104-residue polypeptide: MSFEGARLSMRSRRNGTMGSTRTLYSSVSRSTDVSYSDSDLVNFIQANFKKRECVFFTRDSKAMENICKCGYAQSQHIEGTQINQNEKWNYKKHTKEFPTDAFGDIQFETLGKKGKYLRLSCDTDSETLYELLTQHWHLKTPNLVISVTGGAKNFALKPRMRKIFSRLIYIAQSKGAWILTGGTHYGLMKYIGEVVRDNTISRNSEENIVAIGIAAWGMVSNRDTLIRSCDDEGHFSAQYIMDDFTRDPLYILDNNHTHLLLVDNGCHGHPTVEAKLRNQLEKYISERTSQDSNYGGKIPIVCFAQGGGRETLKAINTSVKSKIPCVVVEGSGQIADVIASLVEVEDVLTSSMVKEKLVRFLPRTVSRLPEEEIESWIKWLKEILESSHLLTVIKMEEAGDEIVSNAISYALYKAFSTNEQDKDNWNGQLKLLLEWNQLDLASDEIFTNDRRWESADLQEVMFTALIKDRPKFVRLFLENGLNLQKFLTNEVLTELFSTHFSTLVYRNLQIAKNSYNDALLTFVWKLVANFRRSFWKEDRSSREDLDVELHDASLTTRHPLQALFIWAILQNKKELSKVIWEQTKGCTLAALGASKLLKTLAKVKNDINAAGESEELANEYETRAVELFTECYSNDEDLAEQLLVYSCEAWGGSNCLELAVEATDQHFIAQPGVQNFLSKQWYGEISRDTKNWKIILCLFIIPLVGCGLVSFRKKPIDKHKKLLWYYVAFFTSPFVVFSWNVVFYIAFLLLFAYVLLMDFHSVPHTPELILYALVFVLFCDEVRQWYMNGVNYFTDLWNVMDTLGLFYFIAGIVFRLHSSNKSSLYSGRVIFCLDYIIFTLRLIHIFTVSRNLGPKIIMLQRMLIDVFFFLFLFAVWMVAFGVARQGILRQNEQRWRWIFRSVIYEPYLAMFGQVPSDVDSTTYDFSHCTFSGNESKPLCVELDEHNLPRFPEWITIPLVCIYMLSTNILLVNLLVAMFGYTVGIVQENNDQVWKFQRYFLVQEYCNRLNIPFPFVVFAYFYMVVKKCFKCCCKEKNMESNACCFRNEDNETLAWEGVMKENYLVKINTKANDNSEEMRHRFRQLDSKLNDLKSLLKEIANNIK.

Residues 1 to 22 (MSFEGARLSMRSRRNGTMGSTR) form a disordered region. Topologically, residues 1–733 (MSFEGARLSM…LWYYVAFFTS (733 aa)) are cytoplasmic. The helical transmembrane segment at 734-758 (PFVVFSWNVVFYIAFLLLFAYVLLM) threads the bilayer. The Extracellular segment spans residues 759–765 (DFHSVPH). The helical transmembrane segment at 766 to 789 (TPELILYALVFVLFCDEVRQWYMN) threads the bilayer. Residues glutamate 782 and glutamine 785 each coordinate Ca(2+). Over 790–796 (GVNYFTD) the chain is Cytoplasmic. Residues 797–817 (LWNVMDTLGLFYFIAGIVFRL) form a helical membrane-spanning segment. Residues asparagine 799 and aspartate 802 each contribute to the Ca(2+) site. Residues 818-822 (HSSNK) are Extracellular-facing. Residues 823–848 (SSLYSGRVIFCLDYIIFTLRLIHIFT) form a helical membrane-spanning segment. Over 849-853 (VSRNL) the chain is Cytoplasmic. The chain crosses the membrane as a helical span at residues 854-890 (GPKIIMLQRMLIDVFFFLFLFAVWMVAFGVARQGILR). Residues 891–895 (QNEQR) lie on the Extracellular side of the membrane. The segment at residues 896-912 (WRWIFRSVIYEPYLAMF) is an intramembrane region (pore-forming). Topologically, residues 913–953 (GQVPSDVDSTTYDFSHCTFSGNESKPLCVELDEHNLPRFPE) are extracellular. Asparagine 934 carries N-linked (GlcNAc...) (complex) asparagine glycosylation. A helical transmembrane segment spans residues 954–984 (WITIPLVCIYMLSTNILLVNLLVAMFGYTVG). At 985–1104 (IVQENNDQVW…LLKEIANNIK (120 aa)) the chain is on the cytoplasmic side. The stretch at 1069 to 1104 (TKANDNSEEMRHRFRQLDSKLNDLKSLLKEIANNIK) forms a coiled coil.

Belongs to the transient receptor (TC 1.A.4) family. LTrpC subfamily. TRPM8 sub-subfamily. Homotetramer. Interacts (via N-terminus and C-terminus domains) with TCAF1; the interaction stimulates TRPM8 channel activity. Interacts (via N-terminus and C-terminus domains) with TCAF2; the interaction inhibits TRPM8 channel activity. Post-translationally, N-glycosylation is not essential for but facilitates cell surface expression, multimerization, association with lipid rafts and ion channel activity. In terms of tissue distribution, expressed in dorsal root and trigeminal ganglia. Specifically expressed in a subset of pain- and temperature-sensing neurons. Not expressed in heavily myelinated neurons. Not expressed in neurons expressing TRPA1 or TRPV1.

Its subcellular location is the cell membrane. The protein localises to the membrane raft. The enzyme catalyses Ca(2+)(in) = Ca(2+)(out). It catalyses the reaction Na(+)(in) = Na(+)(out). It carries out the reaction K(+)(in) = K(+)(out). With respect to regulation, activated by cold temperatures and by both natural and synthetic cooling compounds such as menthol and icilin. Activation of the channel requires the presence of PI(4,5)P2; PI(4,5)P2 is necessary to gate the channel. Activated by intracellular Ca(2+). In terms of biological role, non-selective ion channel permeable to monovalent and divalent cations, including Na(+), K(+), and Ca(2+), with higher permeability for Ca(2+). Activated by multiple factors, such as temperature, voltage, pressure, and changes in osmolality. Activated by cool temperatures (&lt;23-28 degrees Celsius) and by chemical ligands evoking a sensation of coolness, such as menthol and icilin, therefore plays a central role in the detection of environmental cold temperatures. TRPM8 is a voltage-dependent channel; its activation by cold or chemical ligands shifts its voltage thresholds towards physiological membrane potentials, leading to the opening of the channel. In addition to its critical role in temperature sensing, regulates basal tear secretion by sensing evaporation-induced cooling and changes in osmolality. The protein is Transient receptor potential cation channel subfamily M member 8 (Trpm8) of Mus musculus (Mouse).